Consider the following 369-residue polypeptide: Uroporphyrinogen decarboxylase (369 aa).

Substrate is bound by residues 28–32, aspartate 78, tyrosine 154, serine 209, and histidine 339; that span reads RQAGR.

It belongs to the uroporphyrinogen decarboxylase family. In terms of assembly, homodimer.

It is found in the cytoplasm. The enzyme catalyses uroporphyrinogen III + 4 H(+) = coproporphyrinogen III + 4 CO2. The protein operates within porphyrin-containing compound metabolism; protoporphyrin-IX biosynthesis; coproporphyrinogen-III from 5-aminolevulinate: step 4/4. Functionally, catalyzes the decarboxylation of four acetate groups of uroporphyrinogen-III to yield coproporphyrinogen-III. In Polaromonas sp. (strain JS666 / ATCC BAA-500), this protein is Uroporphyrinogen decarboxylase.